Reading from the N-terminus, the 317-residue chain is Acetyl-coenzyme A carboxylase carboxyl transferase subunit alpha (317 aa).

In terms of domain architecture, CoA carboxyltransferase C-terminal spans 39 to 293 (RLETKAREAL…GDAIADALSQ (255 aa)).

This sequence belongs to the AccA family. As to quaternary structure, acetyl-CoA carboxylase is a heterohexamer composed of biotin carboxyl carrier protein (AccB), biotin carboxylase (AccC) and two subunits each of ACCase subunit alpha (AccA) and ACCase subunit beta (AccD).

The protein resides in the cytoplasm. The catalysed reaction is N(6)-carboxybiotinyl-L-lysyl-[protein] + acetyl-CoA = N(6)-biotinyl-L-lysyl-[protein] + malonyl-CoA. It participates in lipid metabolism; malonyl-CoA biosynthesis; malonyl-CoA from acetyl-CoA: step 1/1. Component of the acetyl coenzyme A carboxylase (ACC) complex. First, biotin carboxylase catalyzes the carboxylation of biotin on its carrier protein (BCCP) and then the CO(2) group is transferred by the carboxyltransferase to acetyl-CoA to form malonyl-CoA. This Xanthobacter autotrophicus (strain ATCC BAA-1158 / Py2) protein is Acetyl-coenzyme A carboxylase carboxyl transferase subunit alpha.